Consider the following 952-residue polypeptide: Isoleucine--tRNA ligase (952 aa).

A 'HIGH' region motif is present at residues 58–68; it reads PYANGDIHIGH. Glu-576 is an L-isoleucyl-5'-AMP binding site. The short motif at 617–621 is the 'KMSKS' region element; it reads KMSKS. Lys-620 lines the ATP pocket. Positions 915, 918, 935, and 938 each coordinate Zn(2+).

This sequence belongs to the class-I aminoacyl-tRNA synthetase family. IleS type 1 subfamily. Monomer. It depends on Zn(2+) as a cofactor.

Its subcellular location is the cytoplasm. The enzyme catalyses tRNA(Ile) + L-isoleucine + ATP = L-isoleucyl-tRNA(Ile) + AMP + diphosphate. Its function is as follows. Catalyzes the attachment of isoleucine to tRNA(Ile). As IleRS can inadvertently accommodate and process structurally similar amino acids such as valine, to avoid such errors it has two additional distinct tRNA(Ile)-dependent editing activities. One activity is designated as 'pretransfer' editing and involves the hydrolysis of activated Val-AMP. The other activity is designated 'posttransfer' editing and involves deacylation of mischarged Val-tRNA(Ile). The sequence is that of Isoleucine--tRNA ligase from Aliivibrio fischeri (strain MJ11) (Vibrio fischeri).